The primary structure comprises 501 residues: ATP synthase subunit alpha (501 aa).

169 to 176 (GDRQTGKT) serves as a coordination point for ATP.

The protein belongs to the ATPase alpha/beta chains family. As to quaternary structure, F-type ATPases have 2 components, CF(1) - the catalytic core - and CF(0) - the membrane proton channel. CF(1) has five subunits: alpha(3), beta(3), gamma(1), delta(1), epsilon(1). CF(0) has three main subunits: a(1), b(2) and c(9-12). The alpha and beta chains form an alternating ring which encloses part of the gamma chain. CF(1) is attached to CF(0) by a central stalk formed by the gamma and epsilon chains, while a peripheral stalk is formed by the delta and b chains.

Its subcellular location is the cell inner membrane. It carries out the reaction ATP + H2O + 4 H(+)(in) = ADP + phosphate + 5 H(+)(out). Produces ATP from ADP in the presence of a proton gradient across the membrane. The alpha chain is a regulatory subunit. The chain is ATP synthase subunit alpha from Campylobacter jejuni subsp. doylei (strain ATCC BAA-1458 / RM4099 / 269.97).